We begin with the raw amino-acid sequence, 1100 residues long: Beta-alanine-activating enzyme (1100 aa).

The tract at residues 162 to 181 (HKVTDREDRVSAESRTPEKE) is disordered. ATP is bound by residues 197–205 (TSGTTGTPK), Asp-427, Arg-441, and Lys-526. The 81-residue stretch at 552–632 (EELWGKLQYL…DVYNHIVQAV (81 aa)) folds into the Carrier domain. At Ser-591 the chain carries O-(pantetheine 4'-phosphoryl)serine. The interval 643–671 (SYTTKRKFSDADPEEASGKPARLESAWPS) is disordered. Ser-651 carries the phosphoserine modification.

Belongs to the ATP-dependent AMP-binding enzyme family.

In terms of biological role, covalently binds beta-alanine in an ATP-dependent manner to form a thioester bond with its phosphopantetheine group and transfers it to an as yet unknown acceptor via an amide bond. May be required for a post-translational protein modification or for post-transcriptional modification of an RNA. The chain is Beta-alanine-activating enzyme (Aasdh) from Mus musculus (Mouse).